Here is a 366-residue protein sequence, read N- to C-terminus: Ribosomal RNA large subunit methyltransferase M (366 aa).

Residues Ser188, 221-224 (CPGG), Asp240, Asp260, and Asp277 contribute to the S-adenosyl-L-methionine site. Lys306 (proton acceptor) is an active-site residue.

Belongs to the class I-like SAM-binding methyltransferase superfamily. RNA methyltransferase RlmE family. RlmM subfamily. As to quaternary structure, monomer.

The protein resides in the cytoplasm. The catalysed reaction is cytidine(2498) in 23S rRNA + S-adenosyl-L-methionine = 2'-O-methylcytidine(2498) in 23S rRNA + S-adenosyl-L-homocysteine + H(+). Its function is as follows. Catalyzes the 2'-O-methylation at nucleotide C2498 in 23S rRNA. The sequence is that of Ribosomal RNA large subunit methyltransferase M from Dickeya chrysanthemi (strain Ech1591) (Dickeya zeae (strain Ech1591)).